Consider the following 440-residue polypeptide: Tryptophan aminotransferase-related protein 2 (440 aa).

The chain crosses the membrane as a helical span at residues 7–26; it reads FLSWRNMLVLSLAINFSLIL. Pyridoxal 5'-phosphate contacts are provided by residues Tyr-112, 154–155, Asn-222, 242–245, 265–268, and Arg-276; these read ST, DLAY, and TASK. Lys-268 is modified (N6-(pyridoxal phosphate)lysine).

Belongs to the alliinase family. Pyridoxal 5'-phosphate is required as a cofactor. Expressed in roots, cotyledons and in the apical parts of hypocotyls. In roots, restricted to the provasculature of meristematic regions. Detected on the inner side of the apical hooks.

The protein localises to the membrane. The enzyme catalyses L-tryptophan + 2-oxoglutarate = indole-3-pyruvate + L-glutamate. It catalyses the reaction L-tryptophan + pyruvate = indole-3-pyruvate + L-alanine. It functions in the pathway plant hormone metabolism; auxin biosynthesis. Inhibited by L-kynurenine. Its function is as follows. Involved in auxin production. Both TAA1 and TAR2 are required for maintaining proper auxin levels in roots, while TAA1, TAR1 and TAR2 are required for proper embryo patterning. Involved in the maintenance of the root stem cell niches. The chain is Tryptophan aminotransferase-related protein 2 (TAR2) from Arabidopsis thaliana (Mouse-ear cress).